The primary structure comprises 588 residues: Probable urocanate hydratase (588 aa).

Low complexity predominate over residues 1-15; that stretch reads MDTPSAAAETSEPSA. Residues 1–22 are disordered; that stretch reads MDTPSAAAETSEPSAQWQAYRG. Residues 62-63, Q140, 188-190, E208, R213, 254-255, 275-279, and Y334 contribute to the NAD(+) site; these read GG, GMG, NA, and QTSAH. C431 is an active-site residue. G520 provides a ligand contact to NAD(+).

This sequence belongs to the urocanase family. Requires NAD(+) as cofactor.

The protein resides in the cytoplasm. The catalysed reaction is 4-imidazolone-5-propanoate = trans-urocanate + H2O. Its pathway is amino-acid degradation; L-histidine degradation into L-glutamate; N-formimidoyl-L-glutamate from L-histidine: step 2/3. Functionally, catalyzes the conversion of urocanate to 4-imidazolone-5-propionate. The polypeptide is Probable urocanate hydratase (Halobacterium salinarum (strain ATCC 29341 / DSM 671 / R1)).